A 147-amino-acid chain; its full sequence is Ubiquitin-conjugating enzyme E2 2 (147 aa).

One can recognise a UBC core domain in the interval 1–147; sequence MALKRIQKEL…AREWTQKYAM (147 aa). C85 (glycyl thioester intermediate) is an active-site residue.

This sequence belongs to the ubiquitin-conjugating enzyme family. As to quaternary structure, interacts with the brc-1-brd-1 heterodimer following ionizing irradiation. Expressed in the nervous system.

It is found in the nucleus. It localises to the chromosome. Its subcellular location is the cytoplasm. The catalysed reaction is S-ubiquitinyl-[E1 ubiquitin-activating enzyme]-L-cysteine + [E2 ubiquitin-conjugating enzyme]-L-cysteine = [E1 ubiquitin-activating enzyme]-L-cysteine + S-ubiquitinyl-[E2 ubiquitin-conjugating enzyme]-L-cysteine.. The protein operates within protein modification; protein ubiquitination. Functionally, catalyzes the covalent attachment of ubiquitin to other proteins. Mediates the selective degradation of short-lived and abnormal proteins. Plays a role in the DNA damage response. In particular, in response to ionizing radiation, associates with the E3 ubiquitin-protein ligase brc-1-brd-1 heterodimer on chromatin to activate E3-ubiquitin ligase activity of the heterodimer, and thus its DNA damage repair mechanisms. Required, cell autonomously, for death of the linker cell, a male-specific cell which guides the elongation of the gonad; perhaps acting as part of the ubiquitin proteasome system (UPS) and modulated by heat shock transcription factor hsf-1. The chain is Ubiquitin-conjugating enzyme E2 2 from Caenorhabditis elegans.